We begin with the raw amino-acid sequence, 283 residues long: MMTHWPSPAKLNLFLYITGQRADGYHTLQTLFQFLDYGDTLHIEPRHDGEIHLLTPVTGVENEDNLIVRAARLLMKVASESGRLPAGSGADISIEKRLPMGGGLGGGSSNAATVLVALNHLWQCGLSIDELATLGLTLGADVPVFVRGHAAFAEGVGEILTPVNPPEKWYLVAHPGVSIPTPVIFKDPQLPRNTPKRSIDTLLKCEFSNDCEVIARKRFREVDAALSWLLEYAPSRLTGTGACVFAEFDTESCARQVLEQAPEWLNAFVAKGVNLSPLHRELL.

Residue lysine 10 is part of the active site. 99-109 (PMGGGLGGGSS) contacts ATP. Aspartate 141 is an active-site residue.

It belongs to the GHMP kinase family. IspE subfamily. Homodimer.

It carries out the reaction 4-CDP-2-C-methyl-D-erythritol + ATP = 4-CDP-2-C-methyl-D-erythritol 2-phosphate + ADP + H(+). It participates in isoprenoid biosynthesis; isopentenyl diphosphate biosynthesis via DXP pathway; isopentenyl diphosphate from 1-deoxy-D-xylulose 5-phosphate: step 3/6. Its function is as follows. Catalyzes the phosphorylation of the position 2 hydroxy group of 4-diphosphocytidyl-2C-methyl-D-erythritol. The chain is 4-diphosphocytidyl-2-C-methyl-D-erythritol kinase from Salmonella typhi.